Consider the following 122-residue polypeptide: Small ribosomal subunit protein uS13 (122 aa).

The disordered stretch occupies residues 95 to 122; the sequence is GLPVRGQRTHTNARTRKGPAKPIAGKKK.

Belongs to the universal ribosomal protein uS13 family. Part of the 30S ribosomal subunit. Forms a loose heterodimer with protein S19. Forms two bridges to the 50S subunit in the 70S ribosome.

In terms of biological role, located at the top of the head of the 30S subunit, it contacts several helices of the 16S rRNA. In the 70S ribosome it contacts the 23S rRNA (bridge B1a) and protein L5 of the 50S subunit (bridge B1b), connecting the 2 subunits; these bridges are implicated in subunit movement. Contacts the tRNAs in the A and P-sites. This Caulobacter sp. (strain K31) protein is Small ribosomal subunit protein uS13.